Consider the following 470-residue polypeptide: uncharacterized protein (470 aa).

An SPX domain is found at 1–337; sequence MKFGHDFKRA…SLTAQPLFFQ (337 aa). The interval 118–145 is disordered; that stretch reads ASNVPSTPSDSTQQPPTNTLPSVSASSQ. Over residues 122 to 136 the composition is skewed to low complexity; it reads PSTPSDSTQQPPTNT. An RING-type zinc finger spans residues 374-413; the sequence is CAICSNVAYKPVRLGCSHVFCLHCLIILQKQKVDFCPLCR.

The protein resides in the cytoplasm. This is an uncharacterized protein from Schizosaccharomyces pombe (strain 972 / ATCC 24843) (Fission yeast).